Here is a 523-residue protein sequence, read N- to C-terminus: Peptide chain release factor 3 (523 aa).

Residues 10–277 enclose the tr-type G domain; that stretch reads NKRRTFAIIS…QFVDLAPAPG (268 aa). GTP is bound by residues 19–26, 87–91, and 141–144; these read SHPDAGKT, DTPGH, and NKLD.

It belongs to the TRAFAC class translation factor GTPase superfamily. Classic translation factor GTPase family. PrfC subfamily.

The protein localises to the cytoplasm. Functionally, increases the formation of ribosomal termination complexes and stimulates activities of RF-1 and RF-2. It binds guanine nucleotides and has strong preference for UGA stop codons. It may interact directly with the ribosome. The stimulation of RF-1 and RF-2 is significantly reduced by GTP and GDP, but not by GMP. This Lactobacillus delbrueckii subsp. bulgaricus (strain ATCC BAA-365 / Lb-18) protein is Peptide chain release factor 3.